A 92-amino-acid polypeptide reads, in one-letter code: Small ribosomal subunit protein uS19 (92 aa).

It belongs to the universal ribosomal protein uS19 family.

Protein S19 forms a complex with S13 that binds strongly to the 16S ribosomal RNA. In Bacillus pumilus (strain SAFR-032), this protein is Small ribosomal subunit protein uS19.